The sequence spans 123 residues: Small ribosomal subunit protein uS12 (123 aa).

Position 89 is a 3-methylthioaspartic acid (aspartate 89).

Belongs to the universal ribosomal protein uS12 family. Part of the 30S ribosomal subunit. Contacts proteins S8 and S17. May interact with IF1 in the 30S initiation complex.

With S4 and S5 plays an important role in translational accuracy. In terms of biological role, interacts with and stabilizes bases of the 16S rRNA that are involved in tRNA selection in the A site and with the mRNA backbone. Located at the interface of the 30S and 50S subunits, it traverses the body of the 30S subunit contacting proteins on the other side and probably holding the rRNA structure together. The combined cluster of proteins S8, S12 and S17 appears to hold together the shoulder and platform of the 30S subunit. In Bartonella tribocorum (strain CIP 105476 / IBS 506), this protein is Small ribosomal subunit protein uS12.